The primary structure comprises 573 residues: Adenine deaminase (573 aa).

This sequence belongs to the metallo-dependent hydrolases superfamily. Adenine deaminase family. Mn(2+) is required as a cofactor.

The enzyme catalyses adenine + H2O + H(+) = hypoxanthine + NH4(+). The protein is Adenine deaminase of Bacillus licheniformis (strain ATCC 14580 / DSM 13 / JCM 2505 / CCUG 7422 / NBRC 12200 / NCIMB 9375 / NCTC 10341 / NRRL NRS-1264 / Gibson 46).